Consider the following 165-residue polypeptide: Ubiquitin-like protein ISG15 (165 aa).

2 Ubiquitin-like domains span residues 2-78 (GWDL…VDKC) and 79-157 (DEPL…LRGG). At cysteine 78 the chain carries S-nitrosocysteine; alternate. The short motif at 152–157 (LRLRGG) is the LRLRGG element. Positions 153-157 (RLRGG) are involved in the ligation of specific target proteins. Residue glycine 157 forms a Glycyl lysine isopeptide (Gly-Lys) (interchain with K-? in acceptor proteins) linkage. A propeptide spans 158–165 (GTEPGGRS) (removed in mature form).

Homodimer; disulfide-linked. Interacts with, and is conjugated to its targets by UBE1L (E1 enzyme) and UBE2E2 (E2 enzyme). Interacts with NEDD4. Interacts with PARP12; this interaction inhibits PINK1/Parkin-dependent mitophagy. As to quaternary structure, (Microbial infection) Interacts with vaccinia virus protein E3. In terms of assembly, (Microbial infection) Interaction with influenza B NS1 protein inhibits its conjugation. (Microbial infection) Interacts (via C-terminus) with Crimean-Congo hemorrhagic fever virus (CCHFV) RNA-directed RNA polymerase L (via N-terminus); the deISGylase activity of the viral protein interferes with antiviral signaling pathways mediated by NF-kappaB and IRF signalings. As to quaternary structure, (Microbial infection) Interacts with human cytomegalovirus protein UL26; this interaction inhibits global protein ISGylation. S-nitrosylation decreases its dimerization, thereby increasing the availability as well as the solubility of monomeric ISG15 for its conjugation to cellular proteins. Post-translationally, induced as an inactive, precursor protein that is cleaved by specific proteases to expose the C-terminal diglycine (LRLRGG) motif. This motif is essential not only for its conjugation to substrates but also for its recognition by the relevant processing proteases. As to expression, detected in lymphoid cells, striated and smooth muscle, several epithelia and neurons. Expressed in neutrophils, monocytes and lymphocytes. Enhanced expression seen in pancreatic adenocarcinoma, endometrial cancer, and bladder cancer, as compared to non-cancerous tissue. In bladder cancer, the increase in expression exhibits a striking positive correlation with more advanced stages of the disease.

It localises to the cytoplasm. The protein localises to the secreted. Functionally, ubiquitin-like protein which plays a key role in the innate immune response to viral infection either via its conjugation to a target protein (ISGylation) or via its action as a free or unconjugated protein. ISGylation involves a cascade of enzymatic reactions involving E1, E2, and E3 enzymes which catalyze the conjugation of ISG15 to a lysine residue in the target protein. Its target proteins include IFIT1, MX1/MxA, PPM1B, UBE2L6, UBA7, CHMP5, CHMP2A, CHMP4B and CHMP6. Isgylation of the viral sensor IFIH1/MDA5 promotes IFIH1/MDA5 oligomerization and triggers activation of innate immunity against a range of viruses, including coronaviruses, flaviviruses and picornaviruses. Can also isgylate: EIF2AK2/PKR which results in its activation, RIGI which inhibits its function in antiviral signaling response, EIF4E2 which enhances its cap structure-binding activity and translation-inhibition activity, UBE2N and UBE2E1 which negatively regulates their activity, IRF3 which inhibits its ubiquitination and degradation and FLNB which prevents its ability to interact with the upstream activators of the JNK cascade thereby inhibiting IFNA-induced JNK signaling. Exhibits antiviral activity towards both DNA and RNA viruses, including influenza A, HIV-1 and Ebola virus. Restricts HIV-1 and ebola virus via disruption of viral budding. Inhibits the ubiquitination of HIV-1 Gag and host TSG101 and disrupts their interaction, thereby preventing assembly and release of virions from infected cells. Inhibits Ebola virus budding mediated by the VP40 protein by disrupting ubiquitin ligase activity of NEDD4 and its ability to ubiquitinate VP40. ISGylates influenza A virus NS1 protein which causes a loss of function of the protein and the inhibition of virus replication. The secreted form of ISG15 can: induce natural killer cell proliferation, act as a chemotactic factor for neutrophils and act as a IFN-gamma-inducing cytokine playing an essential role in antimycobacterial immunity. The secreted form acts through the integrin ITGAL/ITGB2 receptor to initiate activation of SRC family tyrosine kinases including LYN, HCK and FGR which leads to secretion of IFNG and IL10; the interaction is mediated by ITGAL. This Homo sapiens (Human) protein is Ubiquitin-like protein ISG15.